Consider the following 647-residue polypeptide: DNA mismatch repair protein MutL (647 aa).

Belongs to the DNA mismatch repair MutL/HexB family.

In terms of biological role, this protein is involved in the repair of mismatches in DNA. It is required for dam-dependent methyl-directed DNA mismatch repair. May act as a 'molecular matchmaker', a protein that promotes the formation of a stable complex between two or more DNA-binding proteins in an ATP-dependent manner without itself being part of a final effector complex. The sequence is that of DNA mismatch repair protein MutL from Bacillus thuringiensis (strain Al Hakam).